The sequence spans 308 residues: Ribosomal RNA small subunit methyltransferase H (308 aa).

S-adenosyl-L-methionine contacts are provided by residues glycine 32–histidine 34, aspartate 52, phenylalanine 78, aspartate 100, and glutamine 107.

It belongs to the methyltransferase superfamily. RsmH family.

It is found in the cytoplasm. It catalyses the reaction cytidine(1402) in 16S rRNA + S-adenosyl-L-methionine = N(4)-methylcytidine(1402) in 16S rRNA + S-adenosyl-L-homocysteine + H(+). In terms of biological role, specifically methylates the N4 position of cytidine in position 1402 (C1402) of 16S rRNA. The chain is Ribosomal RNA small subunit methyltransferase H from Legionella pneumophila (strain Corby).